A 509-amino-acid chain; its full sequence is Oligo-1,6-glucosidase (509 aa).

D198 (nucleophile) is an active-site residue. Catalysis depends on E254, which acts as the Proton donor.

The protein belongs to the glycosyl hydrolase 13 family.

It is found in the cytoplasm. It catalyses the reaction Hydrolysis of (1-&gt;6)-alpha-D-glucosidic linkages in some oligosaccharides produced from starch and glycogen by alpha-amylase, and in isomaltose.. The chain is Oligo-1,6-glucosidase (malL) from Bacillus sp. (strain F5).